Reading from the N-terminus, the 413-residue chain is Glucose-1-phosphate adenylyltransferase (413 aa).

Alpha-D-glucose 1-phosphate is bound by residues Tyr102, Gly167, 182–183 (EK), and Ser200.

It belongs to the bacterial/plant glucose-1-phosphate adenylyltransferase family. Homotetramer.

The catalysed reaction is alpha-D-glucose 1-phosphate + ATP + H(+) = ADP-alpha-D-glucose + diphosphate. The protein operates within glycan biosynthesis; glycogen biosynthesis. Involved in the biosynthesis of ADP-glucose, a building block required for the elongation reactions to produce glycogen. Catalyzes the reaction between ATP and alpha-D-glucose 1-phosphate (G1P) to produce pyrophosphate and ADP-Glc. In Deinococcus radiodurans (strain ATCC 13939 / DSM 20539 / JCM 16871 / CCUG 27074 / LMG 4051 / NBRC 15346 / NCIMB 9279 / VKM B-1422 / R1), this protein is Glucose-1-phosphate adenylyltransferase.